The following is a 258-amino-acid chain: Imidazole glycerol phosphate synthase subunit HisF (258 aa).

Active-site residues include Asp-11 and Asp-130.

It belongs to the HisA/HisF family. In terms of assembly, heterodimer of HisH and HisF.

The protein resides in the cytoplasm. It catalyses the reaction 5-[(5-phospho-1-deoxy-D-ribulos-1-ylimino)methylamino]-1-(5-phospho-beta-D-ribosyl)imidazole-4-carboxamide + L-glutamine = D-erythro-1-(imidazol-4-yl)glycerol 3-phosphate + 5-amino-1-(5-phospho-beta-D-ribosyl)imidazole-4-carboxamide + L-glutamate + H(+). Its pathway is amino-acid biosynthesis; L-histidine biosynthesis; L-histidine from 5-phospho-alpha-D-ribose 1-diphosphate: step 5/9. Its function is as follows. IGPS catalyzes the conversion of PRFAR and glutamine to IGP, AICAR and glutamate. The HisF subunit catalyzes the cyclization activity that produces IGP and AICAR from PRFAR using the ammonia provided by the HisH subunit. The protein is Imidazole glycerol phosphate synthase subunit HisF of Roseiflexus sp. (strain RS-1).